A 417-amino-acid chain; its full sequence is Squamosa promoter-binding-like protein 14 (417 aa).

2 stretches are compositionally biased toward gly residues: residues 1-26 (MEMA…GGGG) and 51-60 (AGGGGTGSGS). Disordered regions lie at residues 1 to 32 (MEMA…EHRQ) and 51 to 102 (AGGG…PPPP). Residues 61–74 (GSASAAPPSSSSKA) are compositionally biased toward low complexity. Residues 75–84 (AGGGRGGGGK) are compositionally biased toward gly residues. The SBP-type zinc finger occupies 101–178 (PPRCQVEGCG…AGHNERRRRP (78 aa)). Zn(2+)-binding residues include cysteine 104, cysteine 109, cysteine 126, histidine 129, cysteine 145, cysteine 148, and histidine 152. Positions 161-177 (KRSCRRRLAGHNERRRR) match the Bipartite nuclear localization signal motif. Serine 163 carries the phosphoserine modification. Cysteine 164 provides a ligand contact to Zn(2+). The segment at 387–417 (LQGNGPAPAPRIDPGSGSTFDQTSNTMDWSL) is disordered. Polar residues predominate over residues 402–417 (SGSTFDQTSNTMDWSL).

Interacts with PCF1 and PCF2. Interacts with IPI1. Interacts with D53. Interacts with SLR1. Interacts (via C-terminus) with SHI1. Post-translationally, phosphorylated at Ser-163 in response to infection by the fungal pathogen Magnaporthe oryzae. Ubiquitinated by IPI1, which leads to proteasomal degradation. Expressed in young panicles. Expressed in the shoot apex at both the vegetative and reproductive stages. Highly expressed in the promordia of primary and secondary branches. Highly expressed in young panicles.

The protein resides in the nucleus. Transcriptional activator that binds to the SBP-box DNA core binding motif 5'-GTAC-3'. Can target the TCP motif 5'-TGGGCC/T-3' through interaction with PCF1 and PCF2. Key regulator of the plant architecture that controls shoot branching and panicle development. Promotes panicle branching. Promotes high grain yield. Binds to the promoters of TB1 and DEP1. Suppresses rice tillering mainly through positive regulation of TB1. Regulates plant height and panicle length through positive regulation of DEP1. Repressed by D53 in strigolactone (SL) signaling. Acts with D53 to mediate the SL-regulated tiller development. Functions as a direct downstream component of D53 in regulating tiller number and SL-induced gene expression. Binds directly to the D53 promoter and plays a critical role in the negative feedback regulation of SL-induced D53 expression. Involved in defense response against pathogens. Phosphorylated at Ser-163 in response to infection by the fungal pathogen Magnaporthe oryzae. Phosphorylation reduces SPL14/IPA1 binding to the GTAC site in the DEP1 promoter and enhances binding to the TGGGCC site in the WRKY45 promoter. Binding to the promoter of the pathogen defense gene WRKY45 activates its expression, leading to enhanced disease resistance. Reduces gibberellin-mediated disease susceptibility by stabilizing SLR1. Possesses transactivation activity in yeast cells. This Oryza sativa subsp. japonica (Rice) protein is Squamosa promoter-binding-like protein 14.